A 1358-amino-acid polypeptide reads, in one-letter code: Probable serine/threonine-protein kinase ifkB (1358 aa).

The 582-residue stretch at 1–582 folds into the Protein kinase domain; the sequence is MIGKGGFGVV…TKQLLESGLL (582 aa). Residues 2–10 and Lys-25 each bind ATP; that span reads IGKGGFGVV. The segment at 125–359 is disordered; it reads GANNTAGGGD…SSSRKKPPKE (235 aa). Residues 136-148 are compositionally biased toward polar residues; the sequence is VSNANSNKSMIVG. The segment covering 149–196 has biased composition (low complexity); the sequence is NNNKKLTLSSSNTSSSSSLLSNNKSKILNTSKSTSTNTSTSTSTSNTN. Residues 197–208 are compositionally biased toward basic residues; that stretch reads KNKKISKKKKSK. Residues 258-285 are compositionally biased toward low complexity; sequence NNNNDSNNNYHSDNESDSFSGSISMSDG. Positions 306–333 are enriched in acidic residues; the sequence is DDNENDDDDEEDDDDEYDEEDDDYETFD. Residues 342-351 are compositionally biased toward low complexity; that stretch reads SNNSKLSTSS. The active-site Proton acceptor is the Asp-413. Disordered regions lie at residues 445-470 and 1148-1204; these read DDLN…TAQQ and GSGG…QQTS. A compositionally biased stretch (low complexity) spans 447–466; the sequence is LNSSTSNAANNINLSSSTNS. Gly residues predominate over residues 1148-1172; that stretch reads GSGGSGGSGGGSSMSSGGGGGGNSN. A compositionally biased stretch (low complexity) spans 1185–1199; sequence SNQSTSSSGNSNNSN.

This sequence belongs to the protein kinase superfamily. Ser/Thr protein kinase family. GCN2 subfamily.

It carries out the reaction L-seryl-[protein] + ATP = O-phospho-L-seryl-[protein] + ADP + H(+). The enzyme catalyses L-threonyl-[protein] + ATP = O-phospho-L-threonyl-[protein] + ADP + H(+). This chain is Probable serine/threonine-protein kinase ifkB (ifkB), found in Dictyostelium discoideum (Social amoeba).